A 325-amino-acid chain; its full sequence is Tetraacyldisaccharide 4'-kinase (325 aa).

Position 55–62 (55–62 (TAGGNGKT)) interacts with ATP.

This sequence belongs to the LpxK family.

The catalysed reaction is a lipid A disaccharide + ATP = a lipid IVA + ADP + H(+). The protein operates within glycolipid biosynthesis; lipid IV(A) biosynthesis; lipid IV(A) from (3R)-3-hydroxytetradecanoyl-[acyl-carrier-protein] and UDP-N-acetyl-alpha-D-glucosamine: step 6/6. Its function is as follows. Transfers the gamma-phosphate of ATP to the 4'-position of a tetraacyldisaccharide 1-phosphate intermediate (termed DS-1-P) to form tetraacyldisaccharide 1,4'-bis-phosphate (lipid IVA). In Salmonella choleraesuis (strain SC-B67), this protein is Tetraacyldisaccharide 4'-kinase.